The primary structure comprises 302 residues: 33 kDa chaperonin (302 aa).

2 disulfides stabilise this stretch: C247–C249 and C280–C283.

It belongs to the HSP33 family. Under oxidizing conditions two disulfide bonds are formed involving the reactive cysteines. Under reducing conditions zinc is bound to the reactive cysteines and the protein is inactive.

It localises to the cytoplasm. Redox regulated molecular chaperone. Protects both thermally unfolding and oxidatively damaged proteins from irreversible aggregation. Plays an important role in the bacterial defense system toward oxidative stress. The protein is 33 kDa chaperonin of Prochlorococcus marinus (strain AS9601).